The chain runs to 112 residues: Large ribosomal subunit protein P1 (112 aa).

A compositionally biased stretch (low complexity) spans 71 to 90 (PAQAAAAAPAGGAPAAAAPA). Positions 71 to 112 (PAQAAAAAPAGGAPAAAAPAESKEGRRSQGESDDDMGFGLLD) are disordered. The segment covering 91–100 (ESKEGRRSQG) has biased composition (basic and acidic residues).

It belongs to the eukaryotic ribosomal protein P1/P2 family. As to quaternary structure, P1 and P2 exist as dimers at the large ribosomal subunit.

Its function is as follows. Plays an important role in the elongation step of protein synthesis. The sequence is that of Large ribosomal subunit protein P1 (rpl-21) from Oscheius tipulae.